Reading from the N-terminus, the 1342-residue chain is DNA-directed RNA polymerase subunit beta (1342 aa).

It belongs to the RNA polymerase beta chain family. In terms of assembly, the RNAP catalytic core consists of 2 alpha, 1 beta, 1 beta' and 1 omega subunit. When a sigma factor is associated with the core the holoenzyme is formed, which can initiate transcription.

The catalysed reaction is RNA(n) + a ribonucleoside 5'-triphosphate = RNA(n+1) + diphosphate. DNA-dependent RNA polymerase catalyzes the transcription of DNA into RNA using the four ribonucleoside triphosphates as substrates. The sequence is that of DNA-directed RNA polymerase subunit beta from Erwinia tasmaniensis (strain DSM 17950 / CFBP 7177 / CIP 109463 / NCPPB 4357 / Et1/99).